The primary structure comprises 274 residues: Methionine aminopeptidase B (274 aa).

H102 is a binding site for substrate. D120, D131, and H194 together coordinate a divalent metal cation. Position 201 (H201) interacts with substrate. 2 residues coordinate a divalent metal cation: E227 and E258.

The protein belongs to the peptidase M24A family. Methionine aminopeptidase type 1 subfamily. In terms of assembly, monomer. Requires Co(2+) as cofactor. The cofactor is Zn(2+). Mn(2+) serves as cofactor. Fe(2+) is required as a cofactor.

It catalyses the reaction Release of N-terminal amino acids, preferentially methionine, from peptides and arylamides.. In terms of biological role, removes the N-terminal methionine from nascent proteins. The N-terminal methionine is often cleaved when the second residue in the primary sequence is small and uncharged (Met-Ala-, Cys, Gly, Pro, Ser, Thr, or Val). Requires deformylation of the N(alpha)-formylated initiator methionine before it can be hydrolyzed. The sequence is that of Methionine aminopeptidase B from Synechocystis sp. (strain ATCC 27184 / PCC 6803 / Kazusa).